We begin with the raw amino-acid sequence, 309 residues long: Partitioning defective protein 6 (309 aa).

Residues Thr14–Arg96 form the PB1 domain. A Pseudo-CRIB domain is found at Ile132 to Ile149. The 94-residue stretch at Arg156–Asn249 folds into the PDZ domain. The segment covering Asn249–Ser270 has biased composition (polar residues). The disordered stretch occupies residues Asn249–Asp309.

It belongs to the PAR6 family. As to quaternary structure, interacts with par-3, required for its peripheral localization, and with cdc-42, required for the activation of a par-3/par-6/pkc-3 complex. Colocalized with par-3 at all stages in early embryos, at the anterior cortex of the embryo. Patchy expression observed at the periphery after completion of meiosis I and in meiosis II, which on completion of metaphase II, is restricted to the anterior 85% of embryo length; this decreases to 55% in embryos between prophase and telophase of the first mitosis. During the first cleavage, expression is detected in the advancing furrow. Along with pkc-3, is unable to associate with the apical cortex of cells that lack par-3. Transiently coexpressed and colocalized with par-3 and pkc-3, asymmetrically in the developing somatic gonad, including the spermathecal precursor cells of L4 larvae.

It localises to the cytoplasm. The protein resides in the cell membrane. The protein localises to the cell junction. Its subcellular location is the tight junction. Functionally, necessary for apicobasal and anterior-posterior asymmetries associated with cell adhesion and gastrulation during the first few cell cycles of embryogenesis. Required for localizing/ maintaining par-3 at the cell periphery. Regulates mes-1 expression and/or localization pattern during early embryogenesis. Acts together with par-3 and pkc-3 in maintaining epithelial cell polarity in the distal spermatheca. Plays a role in endosome and Golgi body positioning. This chain is Partitioning defective protein 6, found in Caenorhabditis elegans.